A 400-amino-acid polypeptide reads, in one-letter code: Elongation factor Tu (400 aa).

A tr-type G domain is found at 10 to 208 (KPHVNVGTIG…AMDNYIPDPQ (199 aa)). A G1 region spans residues 19–26 (GHIDHGKS). 19-26 (GHIDHGKS) provides a ligand contact to GTP. Ser26 lines the Mg(2+) pocket. The tract at residues 60-64 (GITIN) is G2. A G3 region spans residues 81-84 (DCPG). Residues 81–85 (DCPGH) and 136–139 (NKTD) contribute to the GTP site. Residues 136–139 (NKTD) form a G4 region. The segment at 174–176 (SAL) is G5.

Belongs to the TRAFAC class translation factor GTPase superfamily. Classic translation factor GTPase family. EF-Tu/EF-1A subfamily. As to quaternary structure, monomer.

The protein localises to the cytoplasm. It carries out the reaction GTP + H2O = GDP + phosphate + H(+). In terms of biological role, GTP hydrolase that promotes the GTP-dependent binding of aminoacyl-tRNA to the A-site of ribosomes during protein biosynthesis. This Thermotoga neapolitana (strain ATCC 49049 / DSM 4359 / NBRC 107923 / NS-E) protein is Elongation factor Tu.